Here is a 1265-residue protein sequence, read N- to C-terminus: 5-oxoprolinase (1265 aa).

Belongs to the oxoprolinase family. Homodimer.

The protein localises to the cytoplasm. It is found in the cytosol. It carries out the reaction 5-oxo-L-proline + ATP + 2 H2O = L-glutamate + ADP + phosphate + H(+). In terms of biological role, catalyzes the cleavage of 5-oxo-L-proline to form L-glutamate coupled to the hydrolysis of ATP to ADP and inorganic phosphate. The chain is 5-oxoprolinase (oplah) from Dictyostelium discoideum (Social amoeba).